The following is a 564-amino-acid chain: METKTIQLNPRSKNITEGKSRAPNRSMYYAMGYEEADFKKPMIGVANGHSTITPCNSGLQKLADAAIAGIEEAGGNAQVFGTPTISDGMAMGTEGMKYSLVSREVISDCIETCVQGQWMDGVLVIGGCDKNMPGGLMGMLRANVPAIYVYGGTILPGSYKGKDLNIVSVFEAVGENAAGRMSDEDLLQIERRAIPGTGSCGGMYTANTMSSAFEALGISLPYSSTMANPHDEKMNSARESAKVLVEAIKKDIKPRDLVTKKAIENAVAVIMATGGSTNAVLHFLAIAHAAGVDWTIDDFERVRQRTPVLCDLKPSGKYLAVDLHRAGGIPQVMKMLLAAGLLHGDCLTITGQTIAEVLKDVPEAPRADQDVIRPISNPMYAQGHLAILKGNLSPEGCVAKITGLKNPVMTGPARVFDDEQSALAAILAGKIKAGDVMVLRYLGPKGGPGMPEMLAPTGALIGAGLGESVGLITDGRFSGGTWGMVVGHVAPEAAAGGNIAFINEGDSITIDSKQLLLQLNISDAELEKRKVGWKAPAPRYNRGVQAKFAFNASSASKGAVLDDY.

Cys-55 contributes to the [2Fe-2S] cluster binding site. Residue Asp-87 participates in Mg(2+) binding. Cys-128 contacts [2Fe-2S] cluster. Asp-129 and Lys-130 together coordinate Mg(2+). Lys-130 bears the N6-carboxylysine mark. A [2Fe-2S] cluster-binding site is contributed by Cys-200. Position 452 (Glu-452) interacts with Mg(2+). Ser-478 serves as the catalytic Proton acceptor.

The protein belongs to the IlvD/Edd family. In terms of assembly, homodimer. [2Fe-2S] cluster is required as a cofactor. Mg(2+) serves as cofactor.

It carries out the reaction (2R)-2,3-dihydroxy-3-methylbutanoate = 3-methyl-2-oxobutanoate + H2O. The enzyme catalyses (2R,3R)-2,3-dihydroxy-3-methylpentanoate = (S)-3-methyl-2-oxopentanoate + H2O. It participates in amino-acid biosynthesis; L-isoleucine biosynthesis; L-isoleucine from 2-oxobutanoate: step 3/4. Its pathway is amino-acid biosynthesis; L-valine biosynthesis; L-valine from pyruvate: step 3/4. Functions in the biosynthesis of branched-chain amino acids. Catalyzes the dehydration of (2R,3R)-2,3-dihydroxy-3-methylpentanoate (2,3-dihydroxy-3-methylvalerate) into 2-oxo-3-methylpentanoate (2-oxo-3-methylvalerate) and of (2R)-2,3-dihydroxy-3-methylbutanoate (2,3-dihydroxyisovalerate) into 2-oxo-3-methylbutanoate (2-oxoisovalerate), the penultimate precursor to L-isoleucine and L-valine, respectively. The polypeptide is Dihydroxy-acid dehydratase (Polaromonas sp. (strain JS666 / ATCC BAA-500)).